The following is a 205-amino-acid chain: Ribosomal RNA small subunit methyltransferase G (205 aa).

S-adenosyl-L-methionine is bound by residues glycine 70, leucine 75, 121-122, and arginine 136; that span reads IE.

It belongs to the methyltransferase superfamily. RNA methyltransferase RsmG family.

Its subcellular location is the cytoplasm. The enzyme catalyses guanosine(527) in 16S rRNA + S-adenosyl-L-methionine = N(7)-methylguanosine(527) in 16S rRNA + S-adenosyl-L-homocysteine. In terms of biological role, specifically methylates the N7 position of guanine in position 527 of 16S rRNA. In Methylococcus capsulatus (strain ATCC 33009 / NCIMB 11132 / Bath), this protein is Ribosomal RNA small subunit methyltransferase G.